The primary structure comprises 320 residues: Phosphate acetyltransferase (320 aa).

Belongs to the phosphate acetyltransferase and butyryltransferase family.

The protein resides in the cytoplasm. It carries out the reaction acetyl-CoA + phosphate = acetyl phosphate + CoA. The protein operates within metabolic intermediate biosynthesis; acetyl-CoA biosynthesis; acetyl-CoA from acetate: step 2/2. This chain is Phosphate acetyltransferase (pta), found in Mycoplasma genitalium (strain ATCC 33530 / DSM 19775 / NCTC 10195 / G37) (Mycoplasmoides genitalium).